Reading from the N-terminus, the 435-residue chain is Putative pyridoxal-phosphate dependent protein F13B12.4 (435 aa).

An N-terminal signal peptide occupies residues 1-18; it reads MKLLLLALFLSISASCLA. A glycan (N-linked (GlcNAc...) asparagine) is linked at Asn-79. The residue at position 89 (Lys-89) is an N6-(pyridoxal phosphate)lysine. A pyridoxal 5'-phosphate-binding site is contributed by 235-239; that stretch reads GTGGT. Asn-277 is a glycosylation site (N-linked (GlcNAc...) asparagine). Ser-342 is a pyridoxal 5'-phosphate binding site.

Belongs to the cysteine synthase/cystathionine beta-synthase family. Highly divergent.

The protein is Putative pyridoxal-phosphate dependent protein F13B12.4 of Caenorhabditis elegans.